The primary structure comprises 255 residues: Polycomb group RING finger protein 5 (255 aa).

The RING-type zinc-finger motif lies at 18 to 57; it reads CYICKGYLIKPTTVTECLHTFCKTCIVQHFEDSNDCPRCG. A disordered region spans residues 97–132; it reads WKKNKPQENGQDDMSKVDKPKVDEEGDENQDDKDYH. Basic and acidic residues predominate over residues 109 to 119; it reads DMSKVDKPKVD.

In terms of assembly, component of a PRC1-like complex that contains PCGF5, RNF2 and UBE2D3. Interacts with RNF2; the interaction is direct. Interacts with CBX6, CBX7 and CBX8. Interacts with AUTS2; the interaction is direct. Identified in a complex that contains AUTS2, PCGF5, CSNK2B and RNF2.

The protein resides in the nucleus. It localises to the nucleoplasm. Functionally, component of a Polycomb group (PcG) multiprotein PRC1-like complex, a complex class required to maintain the transcriptionally repressive state of many genes, including Hox genes, throughout development. PcG PRC1 complex acts via chromatin remodeling and modification of histones; it mediates monoubiquitination of histone H2A 'Lys-119', rendering chromatin heritably changed in its expressibility. Within the PRC1-like complex, regulates RNF2 ubiquitin ligase activity. Plays a redundant role with PCGF3 as part of a PRC1-like complex that mediates monoubiquitination of histone H2A 'Lys-119' on the X chromosome and is required for normal silencing of one copy of the X chromosome in XX females. This is Polycomb group RING finger protein 5 (PCGF5) from Bos taurus (Bovine).